The chain runs to 323 residues: Phospho-N-acetylmuramoyl-pentapeptide-transferase (323 aa).

Helical transmembrane passes span 12–32 (IVMAIVISFIVASILGPIIIP), 58–78 (PTIGGLIFIFATIITMFVMVG), 84–104 (AMIALYSFVGFGFVGFLDDLL), 120–140 (MILLLIISGFLTWYAYKYIGT), 151–171 (INLGLFYIPAAMFYFAGVTNA), 177–197 (GLDGLATSVTVLVTTFLGIIS), 200–220 (LGHISLAIFCVALAGALLAFL), 229–250 (VFMGDTGSLALGGAVAMVALIL), and 303–323 (KIVSVFSIITVVFCFIAFASL).

The protein belongs to the glycosyltransferase 4 family. MraY subfamily. Mg(2+) is required as a cofactor.

It localises to the cell membrane. The catalysed reaction is UDP-N-acetyl-alpha-D-muramoyl-L-alanyl-gamma-D-glutamyl-meso-2,6-diaminopimeloyl-D-alanyl-D-alanine + di-trans,octa-cis-undecaprenyl phosphate = di-trans,octa-cis-undecaprenyl diphospho-N-acetyl-alpha-D-muramoyl-L-alanyl-D-glutamyl-meso-2,6-diaminopimeloyl-D-alanyl-D-alanine + UMP. It participates in cell wall biogenesis; peptidoglycan biosynthesis. In terms of biological role, catalyzes the initial step of the lipid cycle reactions in the biosynthesis of the cell wall peptidoglycan: transfers peptidoglycan precursor phospho-MurNAc-pentapeptide from UDP-MurNAc-pentapeptide onto the lipid carrier undecaprenyl phosphate, yielding undecaprenyl-pyrophosphoryl-MurNAc-pentapeptide, known as lipid I. This is Phospho-N-acetylmuramoyl-pentapeptide-transferase from Clostridium perfringens (strain SM101 / Type A).